Reading from the N-terminus, the 55-residue chain is Large ribosomal subunit protein bL33 (55 aa).

It belongs to the bacterial ribosomal protein bL33 family.

This chain is Large ribosomal subunit protein bL33, found in Xanthomonas oryzae pv. oryzae (strain PXO99A).